Reading from the N-terminus, the 272-residue chain is Undecaprenyl-diphosphatase (272 aa).

The next 8 membrane-spanning stretches (helical) occupy residues 5-25 (YSLF…FLPV), 45-65 (AKTF…VVFW), 88-108 (HLTL…GLAF), 114-134 (ALFD…LLLA), 153-172 (YRQA…PGFS), 189-209 (YAAS…ASGL), 221-241 (GDLP…LIAI), and 251-271 (ISFV…YWVF).

It belongs to the UppP family.

It localises to the cell inner membrane. It catalyses the reaction di-trans,octa-cis-undecaprenyl diphosphate + H2O = di-trans,octa-cis-undecaprenyl phosphate + phosphate + H(+). Functionally, catalyzes the dephosphorylation of undecaprenyl diphosphate (UPP). Confers resistance to bacitracin. This is Undecaprenyl-diphosphatase from Yersinia pseudotuberculosis serotype IB (strain PB1/+).